The primary structure comprises 367 residues: Aminomethyltransferase (367 aa).

This sequence belongs to the GcvT family. In terms of assembly, the glycine cleavage system is composed of four proteins: P, T, L and H.

It catalyses the reaction N(6)-[(R)-S(8)-aminomethyldihydrolipoyl]-L-lysyl-[protein] + (6S)-5,6,7,8-tetrahydrofolate = N(6)-[(R)-dihydrolipoyl]-L-lysyl-[protein] + (6R)-5,10-methylene-5,6,7,8-tetrahydrofolate + NH4(+). Its function is as follows. The glycine cleavage system catalyzes the degradation of glycine. The chain is Aminomethyltransferase from Mycobacterium bovis (strain ATCC BAA-935 / AF2122/97).